We begin with the raw amino-acid sequence, 126 residues long: RxLR effector protein BLR31 (126 aa).

The signal sequence occupies residues 1–22; the sequence is MLLSRAISVLALLACIRCGVHA. Residues 44–58 carry the RxLR-dEER motif; it reads RLLRTSVDFKDSEER.

The protein belongs to the RxLR effector family.

Its subcellular location is the secreted. It localises to the host cell. Its function is as follows. Secreted effector that triggers a hypersensitive response (HR) in 3 Lactuca saligna accessions (CGN05947, CGN05310, CGN05304). The protein is RxLR effector protein BLR31 of Bremia lactucae (Lettuce downy mildew).